The sequence spans 193 residues: Ion-translocating oxidoreductase complex subunit A (193 aa).

6 consecutive transmembrane segments (helical) span residues 5-25 (LMLLLGTALVNNVVLVKFLGL), 39-59 (IGMGMATTFVLTLASALTWLI), 62-82 (FLLVPFDFGYLRILSFILVIA), 102-122 (VLGIYLPLITTNCAVLGVALL), 134-154 (VLYGFGSALGFTMVMVLFAGL), and 170-190 (APISFITAGLLSLAFMGFAGL).

Belongs to the NqrDE/RnfAE family. As to quaternary structure, the complex is composed of six subunits: RnfA, RnfB, RnfC, RnfD, RnfE and RnfG.

The protein resides in the cell inner membrane. Functionally, part of a membrane-bound complex that couples electron transfer with translocation of ions across the membrane. This Azoarcus sp. (strain BH72) protein is Ion-translocating oxidoreductase complex subunit A.